Reading from the N-terminus, the 699-residue chain is Elongation factor G (699 aa).

The 281-residue stretch at Glu-8–Leu-288 folds into the tr-type G domain. GTP contacts are provided by residues Ala-17–Thr-24, Asp-86–His-90, and Asn-140–Asp-143.

This sequence belongs to the TRAFAC class translation factor GTPase superfamily. Classic translation factor GTPase family. EF-G/EF-2 subfamily.

Its subcellular location is the cytoplasm. Functionally, catalyzes the GTP-dependent ribosomal translocation step during translation elongation. During this step, the ribosome changes from the pre-translocational (PRE) to the post-translocational (POST) state as the newly formed A-site-bound peptidyl-tRNA and P-site-bound deacylated tRNA move to the P and E sites, respectively. Catalyzes the coordinated movement of the two tRNA molecules, the mRNA and conformational changes in the ribosome. In Agrobacterium fabrum (strain C58 / ATCC 33970) (Agrobacterium tumefaciens (strain C58)), this protein is Elongation factor G.